The sequence spans 301 residues: Glycosyltransferase GlyG (301 aa).

It belongs to the glycosyltransferase 2 family.

It participates in protein modification; protein glycosylation. Its function is as follows. Involved in the polymorphic O-glycosylation of the serine-rich repeat protein PsrP. Catalyzes the third step in glycosylation PsrP in this bacteria. Transfers glucose from UDP-glucose to the terminal glucose moiety of already-glycosylated PsrP (using truncated substrates with PsrP SSR1-GlcNAc-Glc). Has a marked preference for PsrP substrate that has already been modified by GlcNAc and glucose. In vitro has hydrolytic activity against UDP-glucose and to a lesser extent against UDP-galactose. Functionally, also catalyzes the fourth step in glycosylation of the serine-rich repeat protein PsrP in this bacteria. Can transfer the sugar from UDP-glucose (and much less well from UDP-galactose) to the terminal sugar moiety of PsrP-GlcNAc-Glc-Gal or of PsrP-GlcNAc-Glc-Glc. The chain is Glycosyltransferase GlyG from Streptococcus pneumoniae serotype 4 (strain ATCC BAA-334 / TIGR4).